A 455-amino-acid chain; its full sequence is Deoxyribodipyrimidine photo-lyase (455 aa).

Positions 2-131 (SVAVVLFTSD…ELHVHDAVVT (130 aa)) constitute a Photolyase/cryptochrome alpha/beta domain. FAD-binding positions include Tyr219 and 231-235 (TSRLS). Interaction with DNA stretches follow at residues 266-273 (QLAWRDFH) and 330-331 (NR). FAD is bound at residue 361 to 363 (DGD). Gln392 is a binding site for DNA.

Belongs to the DNA photolyase class-1 family. As to quaternary structure, monomer. Requires FAD as cofactor. Coenzyme F420-(gamma-Glu)n serves as cofactor.

It catalyses the reaction cyclobutadipyrimidine (in DNA) = 2 pyrimidine residues (in DNA).. Involved in repair of UV radiation-induced DNA damage. Catalyzes the light-dependent monomerization (300-600 nm) of cyclobutyl pyrimidine dimers (in cis-syn configuration), which are formed between adjacent bases on the same DNA strand upon exposure to ultraviolet radiation. This Streptomyces griseus protein is Deoxyribodipyrimidine photo-lyase (phr).